A 397-amino-acid polypeptide reads, in one-letter code: Tryptophan synthase beta chain (397 aa).

N6-(pyridoxal phosphate)lysine is present on lysine 86.

The protein belongs to the TrpB family. As to quaternary structure, tetramer of two alpha and two beta chains. Requires pyridoxal 5'-phosphate as cofactor.

It carries out the reaction (1S,2R)-1-C-(indol-3-yl)glycerol 3-phosphate + L-serine = D-glyceraldehyde 3-phosphate + L-tryptophan + H2O. The protein operates within amino-acid biosynthesis; L-tryptophan biosynthesis; L-tryptophan from chorismate: step 5/5. The beta subunit is responsible for the synthesis of L-tryptophan from indole and L-serine. The sequence is that of Tryptophan synthase beta chain from Aeromonas hydrophila subsp. hydrophila (strain ATCC 7966 / DSM 30187 / BCRC 13018 / CCUG 14551 / JCM 1027 / KCTC 2358 / NCIMB 9240 / NCTC 8049).